A 353-amino-acid polypeptide reads, in one-letter code: Methionine import ATP-binding protein MetN (353 aa).

The region spanning 7–249 (LENIDVTFKQ…PKEELSRQFV (243 aa)) is the ABC transporter domain. 41–48 (GYSGAGKS) serves as a coordination point for ATP.

The protein belongs to the ABC transporter superfamily. Methionine importer (TC 3.A.1.24) family. In terms of assembly, the complex is composed of two ATP-binding proteins (MetN), two transmembrane proteins (MetI) and a solute-binding protein (MetQ).

The protein localises to the cell membrane. The enzyme catalyses L-methionine(out) + ATP + H2O = L-methionine(in) + ADP + phosphate + H(+). The catalysed reaction is D-methionine(out) + ATP + H2O = D-methionine(in) + ADP + phosphate + H(+). Part of the ABC transporter complex MetNIQ involved in methionine import. Responsible for energy coupling to the transport system. The chain is Methionine import ATP-binding protein MetN from Ligilactobacillus salivarius (strain UCC118) (Lactobacillus salivarius).